A 92-amino-acid polypeptide reads, in one-letter code: Large ribosomal subunit protein eL43z (92 aa).

Residues 39 to 60 (CEFCGKFAVKRKAVGIWGCKDC) form a C4-type zinc finger.

This sequence belongs to the eukaryotic ribosomal protein eL43 family.

This is Large ribosomal subunit protein eL43z from Oryza sativa subsp. japonica (Rice).